A 165-amino-acid chain; its full sequence is MIHYRTIDSPIGPLTLAGHGSVLTNLRMLEQTYEPSRTHWTPDPGAFSGAVDQLNAYFAGELTEFDVELDLRGTDFQQRVWKALLTIPYGETRSYGEIADQIGAPGAARAVGLANGHNPIAIIVPCHRVIGASGKLTGYGGGINRKRALLELEKSRAPADLTLFD.

Catalysis depends on Cys-126, which acts as the Nucleophile; methyl group acceptor.

It belongs to the MGMT family.

It localises to the cytoplasm. The catalysed reaction is a 6-O-methyl-2'-deoxyguanosine in DNA + L-cysteinyl-[protein] = S-methyl-L-cysteinyl-[protein] + a 2'-deoxyguanosine in DNA. The enzyme catalyses a 4-O-methyl-thymidine in DNA + L-cysteinyl-[protein] = a thymidine in DNA + S-methyl-L-cysteinyl-[protein]. In terms of biological role, involved in the cellular defense against the biological effects of O6-methylguanine (O6-MeG) and O4-methylthymine (O4-MeT) in DNA. Repairs the methylated nucleobase in DNA by stoichiometrically transferring the methyl group to a cysteine residue in the enzyme. This is a suicide reaction: the enzyme is irreversibly inactivated. This Mycobacterium bovis (strain ATCC BAA-935 / AF2122/97) protein is Methylated-DNA--protein-cysteine methyltransferase.